Consider the following 1128-residue polypeptide: Membrane-associated guanylate kinase, WW and PDZ domain-containing protein 3 (1128 aa).

A PDZ 1 domain is found at 22 to 108 (WGGPAGPDPE…PVRLKTVRPG (87 aa)). The 175-residue stretch at 116 to 290 (RHYLSLQFQK…SMDFRNYMSR (175 aa)) folds into the Guanylate kinase-like domain. 123–130 (FQKGSIDH) is a binding site for ATP. The segment at 184–276 (TYDGNFYGTP…DWMKPVPSYN (93 aa)) is disordered. The segment covering 193–204 (PKPPAEPSPFQP) has biased composition (pro residues). Acidic residues predominate over residues 238 to 247 (LPEDEEEEEK). A compositionally biased stretch (basic and acidic residues) spans 257–267 (ENKEKHSDSSD). WW domains follow at residues 295–328 (EPLPKNWEMAYTDTGMIYFIDHNTKTTTWLDPRL) and 341–374 (GELPYGWEKIEDPQYGTYYVDHINQKTQFENPVL). PDZ domains are found at residues 412-494 (RTSL…TLCR) and 581-657 (TIPL…LILR). The interval 658–688 (GGPPSPTKTGKMKDKQESSGSLEALSDAIPQ) is disordered. 2 consecutive PDZ domains span residues 728–810 (DVFL…TVRR) and 852–939 (DVCL…VAEE). Disordered regions lie at residues 939 to 985 (EEHR…GKEV) and 999 to 1018 (LAQPDAGSASGVGSRHSQAQ). Polar residues-rich tracts occupy residues 946-956 (SGTNSAKQSPA) and 965-974 (AQSSASSTDR). The region spanning 1024 to 1106 (PVELERGPRG…KVLLLLRPGT (83 aa)) is the PDZ 6 domain.

This sequence belongs to the MAGUK family.

It localises to the cell membrane. Its subcellular location is the cell junction. It is found in the tight junction. Functionally, acts as a scaffolding protein at cell-cell junctions, thereby regulating various cellular and signaling processes. This Gallus gallus (Chicken) protein is Membrane-associated guanylate kinase, WW and PDZ domain-containing protein 3 (MAGI3).